A 662-amino-acid chain; its full sequence is Probable quinol oxidase subunit 1 (662 aa).

2 consecutive transmembrane segments (helical) span residues 14–34 and 58–78; these read WMITMAQIGAPFLVIGLIAVI and IMYLICAVLMFVRGGIDALLI. His102 is a binding site for Fe(II)-heme a. 8 helical membrane passes run 103–123, 140–160, 187–207, 228–248, 273–293, 311–331, 336–356, and 376–396; these read GVIMIIFMAMPFIFGLWNIVV, VSFWLFFAGMILFNLSFIIGG, IAIQISGLGTLATGINFFVTI, FITTLIVILAFPPLTVALALM, FFWVWGHPEVYIVILPAFGIY, MVWATAGIAFLSFLVWVHHFF, GALINSFFSISTMLIGIPTGV, and MLFSLAFIPNFLLGGVTGVML. Cu cation-binding residues include His279, Tyr283, His328, and His329. The 1'-histidyl-3'-tyrosine (His-Tyr) cross-link spans 279–283; sequence HPEVY. Position 414 (His414) interacts with heme a3. 5 consecutive transmembrane segments (helical) span residues 415 to 435, 451 to 471, 493 to 513, 587 to 604, and 608 to 627; these read FHYTLVTGVVFACLAGLIFWY, CFWFFMIGFNVCFLPQFILGL, ISTIGALLMAIGFLFLVVSIV, PVGFWIGIFMTIGGFFLI, and VIPALICLFGIFGTMIYRSF. His416 lines the Fe(II)-heme a pocket.

Belongs to the heme-copper respiratory oxidase family. Requires Cu cation as cofactor. It depends on ferriheme a as a cofactor. Heme A3. serves as cofactor.

It localises to the cell membrane. It carries out the reaction 2 a quinol + O2 = 2 a quinone + 2 H2O. It functions in the pathway energy metabolism; oxidative phosphorylation. In terms of biological role, catalyzes quinol oxidation with the concomitant reduction of oxygen to water. The chain is Probable quinol oxidase subunit 1 (qoxB) from Staphylococcus aureus (strain USA300).